We begin with the raw amino-acid sequence, 78 residues long: Large ribosomal subunit protein bL28 (78 aa).

The disordered stretch occupies residues 1 to 23 (MSRKCQITGKKANNAMAVSHSHR).

It belongs to the bacterial ribosomal protein bL28 family.

The polypeptide is Large ribosomal subunit protein bL28 (Picosynechococcus sp. (strain ATCC 27264 / PCC 7002 / PR-6) (Agmenellum quadruplicatum)).